Reading from the N-terminus, the 144-residue chain is Globin-1 (144 aa).

One can recognise a Globin domain in the interval 1–141 (VSANDIKNVQ…ILHQMSSYFA (141 aa)). H89 is a heme b binding site.

This sequence belongs to the globin family. Homodimer.

This is Globin-1 from Phreagena soyoae (Deep-sea cold-seep clam).